A 698-amino-acid chain; its full sequence is MMRSRSKSPRRPSPTARGANCDVELLKTTTRDREELKCMLEKYERHLAEIQGNVKVLKSERDKIFLLYEQAQEEITRLRREMMKSCKSPKSTTAHAILRRVETERDVAFTDLRRMTTERDSLRERLKIAQETAFNEKAHLEQRIEELECTVHNLDDERMEQMSNMTLMKETISTVEKEMKSLARKAMDTESELGRQKAENNSLRLLYENTEKDLSDTQRHLAKKKYELQLTQEKIMCLDEKIDNFTRQNIAQREEISILGGTLNDLAKEKECLQACLDKKSENIASLGESLAMKEKTISGMKNIIAEMEQASRQCTEALIVCEQDVSRMRRQLDETNDELAQIARERDILAHDNDNLQEQFAKAKQENQALSKKLNDTHNELNDIKQKVQDTNLEVNKLKNILKSEESENRQMMEQLRKANEDAENWENKARQSEADNNTLKLELITAEAEGNRLKEKVDSLNREVEQHLNAERSYKSQISTLHKSVVKMEEELQKVQFEKVSALADLSSTRELCIKLDSSKELLNRQLVAKDQEIEMRENELDSAHSEIELLRSQMANERISMQNLEALLVANRDKEYQSQIALQEKESEIQLLKEHLCLAENKMAIQSRDVAQFRNVVTQLEADLDITKRQLGTERFERERAVQELRRQNYSSNAYHMSSTMKPNTKCHSPERAHHRSPDRGLDRSLEENLCYRDF.

A Phosphoserine modification is found at serine 163. The interaction with HIF1A stretch occupies residues 556–689; it reads QMANERISMQ…SPDRGLDRSL (134 aa). The span at 659–670 shows a compositional bias: polar residues; sequence HMSSTMKPNTKC. The tract at residues 659-685 is disordered; it reads HMSSTMKPNTKCHSPERAHHRSPDRGL. Residues 671-685 are compositionally biased toward basic and acidic residues; the sequence is HSPERAHHRSPDRGL. Serine 688 carries the phosphoserine modification.

This sequence belongs to the CEP135/TSGA10 family. In terms of assembly, interacts with HIF1A. Processed into N-terminal 27-kDa and C-terminal 55-kDa fragments. Expressed in the testis, in spermatozoa (at protein level). Expressed in actively dividing fetal tissues, including sternum, intestine, limb, kidney and stomach.

The protein resides in the cytoplasm. The protein localises to the cytoskeleton. It localises to the microtubule organizing center. It is found in the centrosome. Its subcellular location is the centriole. Its function is as follows. Plays a role in spermatogenesis. When overexpressed, prevents nuclear localization of HIF1A. In Homo sapiens (Human), this protein is Testis-specific gene 10 protein (TSGA10).